Consider the following 378-residue polypeptide: MQSAIKSVEYDRPLAAGAACGVGEAWAKVPDALAPDERDALKARIKALLVREKAVLVAHYYVDADLQALADETGGCVADSLEMARFGRDHDAHTLVVAGVRFMGETAKILSPGKRVLMPDLDATCSLDLGCPVDEFSQFCDAHPERTVVVYANTSAAVKARADWMVTSSIGLEIVADLHARGEKIIWAPDRHLGGYIQKKTGADMLMWQGSCLVHDEFKGIELDLLRHEYPDAKILVHPESPEGVVALADVVGSTTQLIDAAVKLDAQRFIVATDLGILHKMRLAAPGKTFIEAPTAGNSATCKSCAHCPWMAMNALSNLADVLERGHNEIFVEAAIAQRARMPIDRMLDFAARHKQRVQASGDLQRDQALFANVGAA.

His59 and Ser80 together coordinate iminosuccinate. Cys125 provides a ligand contact to [4Fe-4S] cluster. Iminosuccinate contacts are provided by residues 151 to 153 (YAN) and Ser168. Cys212 lines the [4Fe-4S] cluster pocket. Iminosuccinate-binding positions include 238–240 (HPE) and Thr255. Position 309 (Cys309) interacts with [4Fe-4S] cluster.

Belongs to the quinolinate synthase family. Type 1 subfamily. Requires [4Fe-4S] cluster as cofactor.

The protein localises to the cytoplasm. It carries out the reaction iminosuccinate + dihydroxyacetone phosphate = quinolinate + phosphate + 2 H2O + H(+). The protein operates within cofactor biosynthesis; NAD(+) biosynthesis; quinolinate from iminoaspartate: step 1/1. In terms of biological role, catalyzes the condensation of iminoaspartate with dihydroxyacetone phosphate to form quinolinate. The polypeptide is Quinolinate synthase (Burkholderia mallei (strain NCTC 10247)).